Here is a 142-residue protein sequence, read N- to C-terminus: Large ribosomal subunit protein uL13 (142 aa).

This sequence belongs to the universal ribosomal protein uL13 family. In terms of assembly, part of the 50S ribosomal subunit.

This protein is one of the early assembly proteins of the 50S ribosomal subunit, although it is not seen to bind rRNA by itself. It is important during the early stages of 50S assembly. The chain is Large ribosomal subunit protein uL13 from Shewanella oneidensis (strain ATCC 700550 / JCM 31522 / CIP 106686 / LMG 19005 / NCIMB 14063 / MR-1).